Reading from the N-terminus, the 257-residue chain is Uridylate kinase (257 aa).

Residue 8-11 (KLSG) coordinates ATP. The involved in allosteric activation by GTP stretch occupies residues 21–26 (GSAGFG). Gly56 serves as a coordination point for UMP. Residues Gly57 and Arg61 each coordinate ATP. Residues Asp75 and 136 to 143 (NGAPFFTT) each bind UMP. ATP contacts are provided by Asn164, Tyr170, and Asp173.

The protein belongs to the UMP kinase family. In terms of assembly, homohexamer.

It is found in the cytoplasm. It catalyses the reaction UMP + ATP = UDP + ADP. The protein operates within pyrimidine metabolism; CTP biosynthesis via de novo pathway; UDP from UMP (UMPK route): step 1/1. Allosterically activated by GTP. Inhibited by UTP. Functionally, catalyzes the reversible phosphorylation of UMP to UDP. The sequence is that of Uridylate kinase from Deinococcus geothermalis (strain DSM 11300 / CIP 105573 / AG-3a).